The chain runs to 888 residues: Alanine--tRNA ligase (888 aa).

The Zn(2+) site is built by His573, His577, Cys676, and His680.

This sequence belongs to the class-II aminoacyl-tRNA synthetase family. It depends on Zn(2+) as a cofactor.

Its subcellular location is the cytoplasm. The enzyme catalyses tRNA(Ala) + L-alanine + ATP = L-alanyl-tRNA(Ala) + AMP + diphosphate. In terms of biological role, catalyzes the attachment of alanine to tRNA(Ala) in a two-step reaction: alanine is first activated by ATP to form Ala-AMP and then transferred to the acceptor end of tRNA(Ala). Also edits incorrectly charged Ser-tRNA(Ala) and Gly-tRNA(Ala) via its editing domain. The chain is Alanine--tRNA ligase from Corynebacterium diphtheriae (strain ATCC 700971 / NCTC 13129 / Biotype gravis).